We begin with the raw amino-acid sequence, 151 residues long: UPF0178 protein Caul_3070 (151 aa).

The protein belongs to the UPF0178 family.

The protein is UPF0178 protein Caul_3070 of Caulobacter sp. (strain K31).